The chain runs to 297 residues: Juvenile hormone acid O-methyltransferase (297 aa).

This sequence belongs to the methyltransferase superfamily. As to expression, predominantly expressed in corpora allata. Also expressed at low level in testis.

The catalysed reaction is (2E,6E)-farnesoate + S-adenosyl-L-methionine = methyl (2E,6E)-farnesoate + S-adenosyl-L-homocysteine. The enzyme catalyses juvenile hormone III carboxylate + S-adenosyl-L-methionine = juvenile hormone III + S-adenosyl-L-homocysteine. O-methyltransferase that transfers a methyl group from S-adenosyl-L-methionine (SAM) to the carboxyl group of juvenile hormone acids to produce active juvenile hormones in the corpora allata, the last step during juvenile hormone biosynthesis. Also able to methylate farnesoate to methyl farnesoate. In Drosophila melanogaster (Fruit fly), this protein is Juvenile hormone acid O-methyltransferase.